The sequence spans 168 residues: Photosystem I assembly protein Ycf3 (168 aa).

TPR repeat units follow at residues 35–68 (AFTY…EIDP), 72–105 (SYIL…NPFL), and 120–153 (GEQA…TPGN).

The protein belongs to the Ycf3 family.

The protein resides in the plastid. It is found in the chloroplast thylakoid membrane. Its function is as follows. Essential for the assembly of the photosystem I (PSI) complex. May act as a chaperone-like factor to guide the assembly of the PSI subunits. The chain is Photosystem I assembly protein Ycf3 from Phalaenopsis aphrodite subsp. formosana (Moth orchid).